The following is a 150-amino-acid chain: Avidin-related protein 3 (150 aa).

The N-terminal stretch at 1–24 (MVHTTSPLLLLLLLSLALVAPSLS) is a signal peptide. One can recognise an Avidin-like domain in the interval 26 to 147 (RKCSLTGKWT…GYNNFTRQRT (122 aa)). A disulfide bridge links Cys28 with Cys105. Biotin contacts are provided by Asn36, Ser40, Tyr57, Thr59, and Asp63. The N-linked (GlcNAc...) asparagine glycan is linked to Asn93. The biotin site is built by Ser95, Ser99, and Asn140. The N-linked (GlcNAc...) asparagine glycan is linked to Asn141.

Belongs to the avidin/streptavidin family. Homotetramer. Post-translationally, glycosylated.

The protein resides in the secreted. In terms of biological role, forms a strong non-covalent specific complex with biotin. The protein is Avidin-related protein 3 (AVR3) of Gallus gallus (Chicken).